The chain runs to 310 residues: MFDPKKFIDEAVEEIKQQISDRKAIIALSGGVDSSVAAVLTHKAIGDKLTAVFVDTGLMRKGEREEVEKTFRDKLGLNLIVVDAKDRFLNALKGVTDPEEKRKIIGKLFIDVFEEIAEDIKAEVLVQGTIAPDWIETQGKIKSHHNVALPHGMVLEVVEPLRELYKDEVRLLAKELGLPDSIVYRQPFPGPGLAVRVLGEVTEEKLNICREANAIVEEEVKKANLDKDLWQYFAVVLDCKATGVKGDEREYNWIVALRMVKSLDAMTAHVPEIPFDLLKRISKRITSEIPNVARVVFDITDKPPATIEFE.

In terms of domain architecture, GMPS ATP-PPase spans 2–185; the sequence is FDPKKFIDEA…LGLPDSIVYR (184 aa). ATP is bound at residue 29–35; it reads SGGVDSS.

Heterodimer composed of a glutamine amidotransferase subunit (A) and a GMP-binding subunit (B).

The catalysed reaction is XMP + L-glutamine + ATP + H2O = GMP + L-glutamate + AMP + diphosphate + 2 H(+). It functions in the pathway purine metabolism; GMP biosynthesis; GMP from XMP (L-Gln route): step 1/1. Catalyzes the synthesis of GMP from XMP. The polypeptide is GMP synthase [glutamine-hydrolyzing] subunit B (guaAB) (Methanocaldococcus jannaschii (strain ATCC 43067 / DSM 2661 / JAL-1 / JCM 10045 / NBRC 100440) (Methanococcus jannaschii)).